Consider the following 186-residue polypeptide: ATP synthase subunit b, chloroplastic (186 aa).

The helical transmembrane segment at 27–43 threads the bilayer; sequence IFETNILNLAVVLGILL.

This sequence belongs to the ATPase B chain family. In terms of assembly, F-type ATPases have 2 components, F(1) - the catalytic core - and F(0) - the membrane proton channel. F(1) has five subunits: alpha(3), beta(3), gamma(1), delta(1), epsilon(1). F(0) has four main subunits: a(1), b(1), b'(1) and c(10-14). The alpha and beta chains form an alternating ring which encloses part of the gamma chain. F(1) is attached to F(0) by a central stalk formed by the gamma and epsilon chains, while a peripheral stalk is formed by the delta, b and b' chains.

The protein localises to the plastid. It is found in the chloroplast thylakoid membrane. F(1)F(0) ATP synthase produces ATP from ADP in the presence of a proton or sodium gradient. F-type ATPases consist of two structural domains, F(1) containing the extramembraneous catalytic core and F(0) containing the membrane proton channel, linked together by a central stalk and a peripheral stalk. During catalysis, ATP synthesis in the catalytic domain of F(1) is coupled via a rotary mechanism of the central stalk subunits to proton translocation. Functionally, component of the F(0) channel, it forms part of the peripheral stalk, linking F(1) to F(0). This is ATP synthase subunit b, chloroplastic from Mesostigma viride (Green alga).